The primary structure comprises 141 residues: Cystatin (141 aa).

An N-terminal signal peptide occupies residues 1 to 26 (MVHFQLPVAAPLCLLCALLLLPSATM). The 101-residue stretch at 29–129 (GGLSPRSVSD…CHFQVWSRPW (101 aa)) folds into the Cystatin domain. Residues 73–77 (QVVAG) carry the Secondary area of contact motif. 2 cysteine pairs are disulfide-bonded: C91–C107 and C120–C140.

Belongs to the cystatin family. In terms of tissue distribution, expressed at a low level by the venom gland (at protein level).

It is found in the secreted. Functionally, inhibits various C1 cysteine proteases including cathepsin L, papain and cathepsin B. This protein has no toxic activity and its function in the venom is unknown. It may play a role as a housekeeping or regulatory protein. This Naja kaouthia (Monocled cobra) protein is Cystatin.